Consider the following 612-residue polypeptide: Phosphopentomutase (612 aa).

N-acetylalanine is present on alanine 2. Positions 63 and 165 each coordinate alpha-D-glucose 1,6-bisphosphate. The Phosphoserine intermediate role is filled by serine 165. Positions 165, 322, 324, and 326 each coordinate Mg(2+). Serine 165 is subject to Phosphoserine. 5 residues coordinate alpha-D-glucose 1,6-bisphosphate: aspartate 326, arginine 327, threonine 400, glutamate 424, and lysine 438.

Belongs to the phosphohexose mutase family. As to quaternary structure, monomer. It depends on Mg(2+) as a cofactor.

The protein localises to the cytoplasm. It localises to the cytosol. The catalysed reaction is alpha-D-ribose 1-phosphate = D-ribose 5-phosphate. It catalyses the reaction 2-deoxy-alpha-D-ribose 1-phosphate = 2-deoxy-D-ribose 5-phosphate. It carries out the reaction alpha-D-glucose 1-phosphate = alpha-D-glucose 6-phosphate. The enzyme catalyses O-phospho-L-seryl-[protein] + alpha-D-glucose 1-phosphate = alpha-D-glucose 1,6-bisphosphate + L-seryl-[protein]. The catalysed reaction is alpha-D-glucose 1,6-bisphosphate + L-seryl-[protein] = O-phospho-L-seryl-[protein] + alpha-D-glucose 6-phosphate. Catalyzes the conversion of the nucleoside breakdown products ribose-1-phosphate and deoxyribose-1-phosphate to the corresponding 5-phosphopentoses. Catalyzes the reversible isomerization of alpha-D-glucose 1-phosphate to alpha-D-glucose 6-phosphate but with a lower catalytic efficiency. The mechanism proceeds via the intermediate compound alpha-D-glucose 1,6-bisphosphate. In vitro, also has a low glucose 1,6-bisphosphate synthase activity which is most probably not physiologically relevant. This chain is Phosphopentomutase (PGM2), found in Pongo abelii (Sumatran orangutan).